A 70-amino-acid chain; its full sequence is Beta-defensin 107 (70 aa).

Positions 1 to 26 are cleaved as a signal peptide; it reads MPGAMKIFVFILAALILLAQIFQART. 2 disulfide bridges follow: C41/C55 and C45/C64.

This sequence belongs to the beta-defensin family. Specifically expressed in testis.

The protein resides in the secreted. In terms of biological role, has antibacterial activity. This Homo sapiens (Human) protein is Beta-defensin 107 (DEFB107A).